Reading from the N-terminus, the 265-residue chain is MFPELNSLLGVTTDTLTLGKFTLLCDSNTDGSFLVHHFLSYYLRAGCRVCFVALVQSFSHYNIVAQKLGVNLSSAKDEGQLVFLEGLKSYTDLLFGDKSEAEETNPLCFLRAGSDLRPLYSFVSAALAPSAGQPWKCPVLILDDLSVLLSLGVTSLQVLDFMHYCRATVCTQYKGNVLCLVHGAEESGDEENELVLRSLSHQSHLILQAEGLSTGFCKDVHGQLKIIRGAVSSGKRGKNQPEIYQYKIQDKHVAFFARGLSAAVL.

It belongs to the ELP6 family. In terms of assembly, component of the elongator complex.

The protein localises to the cytoplasm. It localises to the nucleus. The protein operates within tRNA modification; 5-methoxycarbonylmethyl-2-thiouridine-tRNA biosynthesis. Its function is as follows. Component of the elongator complex which is required for multiple tRNA modifications, including mcm5U (5-methoxycarbonylmethyl uridine), mcm5s2U (5-methoxycarbonylmethyl-2-thiouridine), and ncm5U (5-carbamoylmethyl uridine). The elongator complex catalyzes formation of carboxymethyluridine in the wobble base at position 34 in tRNAs. In Xenopus laevis (African clawed frog), this protein is Elongator complex protein 6 (elp6).